The primary structure comprises 225 residues: Protein ZW2 (225 aa).

Residues 7–225 form the DOG1 domain; sequence SETFASFFND…FYLRLRDLGV (219 aa).

May be involved in the regulation of abscisic acid (ABA) sensitivity. This is Protein ZW2 from Arabidopsis thaliana (Mouse-ear cress).